The primary structure comprises 1723 residues: Probable outer membrane protein pmp20 (1723 aa).

A signal peptide spans 1–21 (MKWLPATAVFAAVLPALTAFG). 2 disordered regions span residues 78–100 (VTPDANDSSSNSSKGGSSSSGAT) and 139–161 (LSSSSSGGSSSSSSSSSSGSASA). Composition is skewed to low complexity over residues 85–100 (SSSNSSKGGSSSSGAT) and 140–161 (SSSSSGGSSSSSSSSSSGSASA). The Autotransporter domain maps to 1434–1723 (EDPAFNNFWA…MANGGIRFVF (290 aa)).

It belongs to the PMP outer membrane protein family.

The protein localises to the secreted. Its subcellular location is the cell wall. The protein resides in the cell outer membrane. The protein is Probable outer membrane protein pmp20 (pmp20) of Chlamydia pneumoniae (Chlamydophila pneumoniae).